A 286-amino-acid chain; its full sequence is Pyridoxine 4-dehydrogenase (286 aa).

Catalysis depends on tyrosine 59, which acts as the Proton donor. 210–218 (FPLGGFTPL) is an NADP(+) binding site.

This sequence belongs to the aldo/keto reductase family. Aldo/keto reductase 2 subfamily.

The catalysed reaction is pyridoxine + NADP(+) = pyridoxal + NADPH + H(+). It catalyses the reaction pyridoxine + NAD(+) = pyridoxal + NADH + H(+). Its function is as follows. Catalyzes the NAD(P)H-dependent reduction of pyridoxal to pyridoxine in vitro. Is not able to reduce 4-pyridoxate, and to oxidize pyridoxine or pyridoxamine. Has Kemp eliminase activity towards the non-physiological substrate 5-nitrobenzisoxazole, producing 4-nitro-2-cyanophenol; this activity is not considered to be physiologically relevant. This is Pyridoxine 4-dehydrogenase from Escherichia coli (strain K12).